Reading from the N-terminus, the 162-residue chain is Caveolin-2 (162 aa).

Residues 1–86 are Cytoplasmic-facing; that stretch reads MGLETEKADV…FEISKYVIYK (86 aa). Y19 is modified (phosphotyrosine; by SRC). 2 positions are modified to phosphoserine: S20 and S23. A Phosphotyrosine; by SRC modification is found at Y27. The residue at position 36 (S36) is a Phosphoserine. The segment at residues 87–107 is an intramembrane region (helical); the sequence is FLTVFLAIPLAFAAGIIFATL. Topologically, residues 108 to 162 are cytoplasmic; sequence SCLHIWIIMPFVKTCLMVLPSVQTIWRSVTDAVIAPLCTSVGRVFSSVSLQLSRD.

It belongs to the caveolin family. In terms of assembly, monomer or homodimer. Interacts with CAV1; the interaction forms a stable heterooligomeric complex that is required for targeting to lipid rafts and for caveolae formation. Tyrosine phosphorylated forms do not form heterooligomers with the Tyr-19-phosphorylated form existing as a monomer or dimer, and the Tyr-27-form as a monomer only. Interacts (tyrosine phosphorylated form) with the SH2 domain-containing proteins, RASA1, NCK1 and SRC. Interacts (tyrosine phosphorylated form) with INSR, the interaction (Tyr-27-phosphorylated form) is increased on insulin stimulation. Interacts (Tyr-19 phosphorylated form) with MAPK1 (phosphorylated form); the interaction, promoted by insulin, leads to nuclear location and MAPK1 activation. Interacts with STAT3; the interaction is increased on insulin-induced tyrosine phosphorylation leading to STAT activation. In terms of processing, phosphorylated on serine and tyrosine residues. CAV1 promotes phosphorylation on Ser-23 which then targets the complex to the plasma membrane, lipid rafts and caveolae. Phosphorylation on Ser-36 appears to modulate mitosis in endothelial cells. Phosphorylation on both Tyr-19 and Tyr-27 is required for insulin-induced 'Ser-727' phosphorylation of STAT3 and its activation. Phosphorylation on Tyr-19 is required for insulin-induced phosphorylation of MAPK1 and DNA binding of STAT3. Tyrosine phosphorylation is induced by both EGF and insulin (By. similarity).

It localises to the nucleus. The protein resides in the cytoplasm. The protein localises to the golgi apparatus membrane. It is found in the cell membrane. Its subcellular location is the membrane. It localises to the caveola. In terms of biological role, may act as a scaffolding protein within caveolar membranes. Interacts directly with G-protein alpha subunits and can functionally regulate their activity. Acts as an accessory protein in conjunction with CAV1 in targeting to lipid rafts and driving caveolae formation. The Ser-36 phosphorylated form has a role in modulating mitosis in endothelial cells. Positive regulator of cellular mitogenesis of the MAPK signaling pathway. Required for the insulin-stimulated nuclear translocation and activation of MAPK1 and STAT3, and the subsequent regulation of cell cycle progression. This chain is Caveolin-2 (CAV2), found in Carollia perspicillata (Seba's short-tailed bat).